Reading from the N-terminus, the 504-residue chain is Glutamate--tRNA ligase (504 aa).

Positions 12 to 22 (PSPTGALHIGG) match the 'HIGH' region motif. The 'KMSKS' region motif lies at 260 to 264 (KLSKR). ATP is bound at residue Lys-263.

The protein belongs to the class-I aminoacyl-tRNA synthetase family. Glutamate--tRNA ligase type 1 subfamily. Monomer.

It localises to the cytoplasm. It catalyses the reaction tRNA(Glu) + L-glutamate + ATP = L-glutamyl-tRNA(Glu) + AMP + diphosphate. Functionally, catalyzes the attachment of glutamate to tRNA(Glu) in a two-step reaction: glutamate is first activated by ATP to form Glu-AMP and then transferred to the acceptor end of tRNA(Glu). This Bacteroides thetaiotaomicron (strain ATCC 29148 / DSM 2079 / JCM 5827 / CCUG 10774 / NCTC 10582 / VPI-5482 / E50) protein is Glutamate--tRNA ligase.